The primary structure comprises 215 residues: UPF0502 protein YceH (215 aa).

It belongs to the UPF0502 family.

The protein is UPF0502 protein YceH of Salmonella heidelberg (strain SL476).